Reading from the N-terminus, the 99-residue chain is DNA-directed RNA polymerase subunit omega (99 aa).

The protein belongs to the RNA polymerase subunit omega family. The RNAP catalytic core consists of 2 alpha, 1 beta, 1 beta' and 1 omega subunit. When a sigma factor is associated with the core the holoenzyme is formed, which can initiate transcription.

It catalyses the reaction RNA(n) + a ribonucleoside 5'-triphosphate = RNA(n+1) + diphosphate. Promotes RNA polymerase assembly. Latches the N- and C-terminal regions of the beta' subunit thereby facilitating its interaction with the beta and alpha subunits. In Deinococcus deserti (strain DSM 17065 / CIP 109153 / LMG 22923 / VCD115), this protein is DNA-directed RNA polymerase subunit omega.